The chain runs to 412 residues: Tyrosine--tRNA ligase (412 aa).

Residues Pro-48–His-57 carry the 'HIGH' region motif. The short motif at Lys-232–Ser-236 is the 'KMSKS' region element. An ATP-binding site is contributed by Lys-235. In terms of domain architecture, S4 RNA-binding spans Val-342–Pro-405.

This sequence belongs to the class-I aminoacyl-tRNA synthetase family. TyrS type 2 subfamily. As to quaternary structure, homodimer.

It localises to the cytoplasm. The enzyme catalyses tRNA(Tyr) + L-tyrosine + ATP = L-tyrosyl-tRNA(Tyr) + AMP + diphosphate + H(+). Its function is as follows. Catalyzes the attachment of tyrosine to tRNA(Tyr) in a two-step reaction: tyrosine is first activated by ATP to form Tyr-AMP and then transferred to the acceptor end of tRNA(Tyr). This Salinibacter ruber (strain DSM 13855 / M31) protein is Tyrosine--tRNA ligase.